Here is a 419-residue protein sequence, read N- to C-terminus: CinA-like protein (419 aa).

Belongs to the CinA family.

This Picosynechococcus sp. (strain ATCC 27264 / PCC 7002 / PR-6) (Agmenellum quadruplicatum) protein is CinA-like protein.